A 357-amino-acid chain; its full sequence is Aminotransferase TOXF (357 aa).

Arg87 lines the pyridoxal 5'-phosphate pocket. Lys188 carries the post-translational modification N6-(pyridoxal phosphate)lysine. Glu227 contributes to the pyridoxal 5'-phosphate binding site.

The protein belongs to the class-IV pyridoxal-phosphate-dependent aminotransferase family. The cofactor is pyridoxal 5'-phosphate.

It participates in mycotoxin biosynthesis; HC-toxin biosynthesis. Functionally, aminotransferase, part of the diffuse TOX2 gene cluster that mediates the biosynthesis of the HC-toxin, cyclic tetrapeptide of structure cyclo(D-Pro-L-Ala-D-Ala-L-Aeo), where Aeo stands for 2-amino-9,10-epoxi-8-oxodecanoic acid. HC-toxin is a determinant of specificity and virulence in the interaction between the producing fungus and its host, maize. TOXF contributes to the synthesis of 2-amino-9,10-epoxi-8-oxodecanoic acid, an essential precursor for the production of the major forms of HC-toxin by the non-ribosomal peptide synthetase HTS1. This Cochliobolus carbonum (Maize leaf spot fungus) protein is Aminotransferase TOXF (TOXF).